Reading from the N-terminus, the 170-residue chain is Acetyl-CoA decarbonylase/synthase complex subunit epsilon 2 (170 aa).

Belongs to the CdhB family. As to quaternary structure, heterotetramer of two alpha and two epsilon subunits. The ACDS complex is made up of alpha, epsilon, beta, gamma and delta subunits with a probable stoichiometry of (alpha(2)epsilon(2))(4)-beta(8)-(gamma(1)delta(1))(8).

The protein operates within one-carbon metabolism; methanogenesis from acetate. Its function is as follows. Part of a complex that catalyzes the reversible cleavage of acetyl-CoA, allowing growth on acetate as sole source of carbon and energy. The alpha-epsilon subcomponent functions as a carbon monoxide dehydrogenase. The precise role of the epsilon subunit is unclear; it may have a stabilizing role within the alpha(2)epsilon(2) component and/or be involved in electron transfer to FAD during a potential FAD-mediated CO oxidation. The sequence is that of Acetyl-CoA decarbonylase/synthase complex subunit epsilon 2 (cdhB2) from Methanosarcina mazei (strain ATCC BAA-159 / DSM 3647 / Goe1 / Go1 / JCM 11833 / OCM 88) (Methanosarcina frisia).